Here is a 358-residue protein sequence, read N- to C-terminus: Protein RecA (358 aa).

Residue G69–T76 coordinates ATP.

Belongs to the RecA family.

It localises to the cytoplasm. Its function is as follows. Can catalyze the hydrolysis of ATP in the presence of single-stranded DNA, the ATP-dependent uptake of single-stranded DNA by duplex DNA, and the ATP-dependent hybridization of homologous single-stranded DNAs. It interacts with LexA causing its activation and leading to its autocatalytic cleavage. The polypeptide is Protein RecA (Trichormus variabilis (strain ATCC 29413 / PCC 7937) (Anabaena variabilis)).